A 391-amino-acid polypeptide reads, in one-letter code: uncharacterized protein (391 aa).

11 helical membrane passes run 15-35 (LSFCVVFLLRMLGIFSVLPIL), 48-68 (FLIGLAVGIYGATQIVFQIPF), 81-101 (IIFGLFIFFIGSLIVVSTNSI), 139-159 (IIGVSFAVSFLISVVSAPIIA), 167-187 (IFWISAVFSIFSILIVFFLIP), 217-237 (FYLGVFLLHFLLTMNFLIIPY), 251-271 (IVYFATIVFSFFFLFLIVFYF), 275-295 (FFLKNIIEICIFFIFLSLLLF), 303-323 (ICLTFALQIFFIAFNILEIFF), 346-366 (TSQFLGIACGGVLNGLLCTFF), and 369-389 (NHIFLFEIFITLIWFIFSFFC).

The protein belongs to the major facilitator superfamily.

The protein resides in the cell membrane. This is an uncharacterized protein from Buchnera aphidicola subsp. Schizaphis graminum (strain Sg).